Consider the following 206-residue polypeptide: Pyridoxine/pyridoxamine 5'-phosphate oxidase (206 aa).

Residues R53–K58, Y68–T69, K75, and Q97 each bind FMN. K58 is a substrate binding site. Y115, R119, and S123 together coordinate substrate. FMN is bound by residues Q132–S133 and W177. A substrate-binding site is contributed by R183–H185. FMN is bound at residue R187.

This sequence belongs to the pyridoxamine 5'-phosphate oxidase family. In terms of assembly, homodimer. FMN serves as cofactor.

The catalysed reaction is pyridoxamine 5'-phosphate + O2 + H2O = pyridoxal 5'-phosphate + H2O2 + NH4(+). It carries out the reaction pyridoxine 5'-phosphate + O2 = pyridoxal 5'-phosphate + H2O2. Its pathway is cofactor metabolism; pyridoxal 5'-phosphate salvage; pyridoxal 5'-phosphate from pyridoxamine 5'-phosphate: step 1/1. It functions in the pathway cofactor metabolism; pyridoxal 5'-phosphate salvage; pyridoxal 5'-phosphate from pyridoxine 5'-phosphate: step 1/1. Catalyzes the oxidation of either pyridoxine 5'-phosphate (PNP) or pyridoxamine 5'-phosphate (PMP) into pyridoxal 5'-phosphate (PLP). The protein is Pyridoxine/pyridoxamine 5'-phosphate oxidase of Rhizobium johnstonii (strain DSM 114642 / LMG 32736 / 3841) (Rhizobium leguminosarum bv. viciae).